The chain runs to 518 residues: MQNLPKWKIVLSIICTVFAIICALPNFIQINWKFLPHDSVNLGLDLRGGANLLLDVDFDTYLNDSMENIADTLRKNFREHKIGYKNLLVRHNNIQLEVRSTEVLKSLKKIIHKIDPEIIIEVNKNKIKLRYSESRLNDLLNKVVEQSIEIVRMRIDSTGTKEPILQRQGNKHILLQVPGVDNPSYLKNILGKTAKLTFHLVDENANIEEAIKGHIPLDSMLIKGDSEHHGEYYIVIKKKVLLSGTHLTKASASFDQNSQPMVAFSFNNLGSKIFTEITKNNTGKRLAIVLDNKLLSAPMINGAIIGGDGIITGNFTIESANELALLLRVGSLPTPLKIIEERSIGPNLGADSIESGKKAGLIGFTAVCIFMILSYGVIGLFANIALILALLYILALLSLFQATLTLPGIAGIILTMGMAVDANVLIYERIKEELHKGVSNLYAIRTGFESAFATIIDSNLTTLIVAFALYIFGVGAIKGFAVALTIGIISSMFSAIIITKLLIDIWVKYFKPEKLGLL.

Transmembrane regions (helical) follow at residues 9–29 (IVLS…NFIQ), 356–376 (GKKA…LSYG), 377–397 (VIGL…LALL), 406–426 (LPGI…NVLI), 451–473 (AFAT…YIFG), and 486–506 (IGII…IDIW).

The protein belongs to the SecD/SecF family. SecD subfamily. In terms of assembly, forms a complex with SecF. Part of the essential Sec protein translocation apparatus which comprises SecA, SecYEG and auxiliary proteins SecDF-YajC and YidC.

Its subcellular location is the cell inner membrane. In terms of biological role, part of the Sec protein translocase complex. Interacts with the SecYEG preprotein conducting channel. SecDF uses the proton motive force (PMF) to complete protein translocation after the ATP-dependent function of SecA. The sequence is that of Protein translocase subunit SecD from Rickettsia typhi (strain ATCC VR-144 / Wilmington).